Reading from the N-terminus, the 328-residue chain is Trans-O-hydroxybenzylidenepyruvate hydratase-aldolase (328 aa).

It belongs to the DapA family. In terms of assembly, homotrimer.

The catalysed reaction is (3E)-4-(2-hydroxyphenyl)-2-oxobut-3-enoate + H2O = salicylaldehyde + pyruvate. It participates in aromatic compound metabolism; naphthalene degradation. Inhibited bye p-chloromercuribenzoate and salicylaldehyde. Activated by salicylate. Its function is as follows. Involved in the naphthalene and naphthalenesulfonate catabolic pathway. Catalyzes the transformation of trans-O-hydroxybenzylidenepyruvate (THBPA) to salicylaldehyde and pyruvate. The reaction is reversible. Can also use 2,4-dihydroxybenzalpyruvate (2,4-DHBP) and 2,6-dihydroxybenzalpyruvate (2,6-DHBP). The sequence is that of Trans-O-hydroxybenzylidenepyruvate hydratase-aldolase (nsaE) from Sphingobium xenophagum.